The following is a 197-amino-acid chain: Xanthine phosphoribosyltransferase (197 aa).

Leucine 20 and asparagine 27 together coordinate xanthine. 128–132 (ANGQA) contributes to the 5-phospho-alpha-D-ribose 1-diphosphate binding site. A xanthine-binding site is contributed by lysine 156.

It belongs to the purine/pyrimidine phosphoribosyltransferase family. Xpt subfamily. As to quaternary structure, homodimer.

Its subcellular location is the cytoplasm. It catalyses the reaction XMP + diphosphate = xanthine + 5-phospho-alpha-D-ribose 1-diphosphate. Its pathway is purine metabolism; XMP biosynthesis via salvage pathway; XMP from xanthine: step 1/1. Functionally, converts the preformed base xanthine, a product of nucleic acid breakdown, to xanthosine 5'-monophosphate (XMP), so it can be reused for RNA or DNA synthesis. In Bacillus cereus (strain G9842), this protein is Xanthine phosphoribosyltransferase.